The sequence spans 382 residues: Mannitol-1-phosphate 5-dehydrogenase (382 aa).

3–14 provides a ligand contact to NAD(+); sequence ALHFGAGNIGRG. Lys269 carries the post-translational modification N6-acetyllysine.

This sequence belongs to the mannitol dehydrogenase family.

The catalysed reaction is D-mannitol 1-phosphate + NAD(+) = beta-D-fructose 6-phosphate + NADH + H(+). This Escherichia coli O7:K1 (strain IAI39 / ExPEC) protein is Mannitol-1-phosphate 5-dehydrogenase.